Consider the following 473-residue polypeptide: NADH-quinone oxidoreductase subunit N (473 aa).

A run of 14 helical transmembrane segments spans residues 3–23, 30–50, 62–82, 99–119, 120–140, 153–173, 195–215, 230–252, 262–282, 291–311, 326–346, 368–388, 408–428, and 444–464; these read LHYL…LVIA, LAFY…CSLL, FSSM…FLWL, FYLL…SEHF, ASFF…IAYS, YLIL…IVYL, MLFT…LSLV, LPTT…WKLF, IVLT…NLLA, ILAF…FLFN, ALLF…SILM, AASL…LGFM, FLVI…MVML, and VASL…PALF.

It belongs to the complex I subunit 2 family. As to quaternary structure, NDH-1 is composed of 13 different subunits. Subunits NuoA, H, J, K, L, M, N constitute the membrane sector of the complex.

It is found in the cell inner membrane. It carries out the reaction a quinone + NADH + 5 H(+)(in) = a quinol + NAD(+) + 4 H(+)(out). Functionally, NDH-1 shuttles electrons from NADH, via FMN and iron-sulfur (Fe-S) centers, to quinones in the respiratory chain. The immediate electron acceptor for the enzyme in this species is believed to be ubiquinone. Couples the redox reaction to proton translocation (for every two electrons transferred, four hydrogen ions are translocated across the cytoplasmic membrane), and thus conserves the redox energy in a proton gradient. This is NADH-quinone oxidoreductase subunit N from Shewanella woodyi (strain ATCC 51908 / MS32).